The sequence spans 189 residues: Ribosomal RNA large subunit methyltransferase E (189 aa).

S-adenosyl-L-methionine is bound by residues Gly45, Phe47, Asp64, Asp82, and Asp104. The Proton acceptor role is filled by Lys144.

This sequence belongs to the class I-like SAM-binding methyltransferase superfamily. RNA methyltransferase RlmE family.

The protein resides in the cytoplasm. The catalysed reaction is uridine(2552) in 23S rRNA + S-adenosyl-L-methionine = 2'-O-methyluridine(2552) in 23S rRNA + S-adenosyl-L-homocysteine + H(+). Its function is as follows. Specifically methylates the uridine in position 2552 of 23S rRNA at the 2'-O position of the ribose in the fully assembled 50S ribosomal subunit. This chain is Ribosomal RNA large subunit methyltransferase E, found in Borreliella afzelii (strain PKo) (Borrelia afzelii).